The following is a 333-amino-acid chain: MTEGNFVDYVKIYVSSGKGGKGSTHLHREKFIEKGGPDGGDGGRGGHVYLVGNKGLWTLFHLKFARHIKAGHGGDGGSDRSTGADGEDKFIEVPLGTVVKDKETGEVLFEITEDGEKRILAKGGKGGLGNWHFRSSTNQTPRYAQPGLPGLEMDVILELKVLADVGLVGFPNAGKSTLLSVLTSAKPKIADYPFTTLKPNLGIVAYRDFQSFVIADIPGIIEGAAEGKGLGHYFLRHIERNSTLLFLVPVDTPDIKAEYDILVNELTKYNPEMLDKERLLVISKCDMLDDELKAELKAELDVSFKDIPYMLISSVAQQGLTDLKDKLWKMLNE.

The 159-residue stretch at 4–162 (GNFVDYVKIY…MDVILELKVL (159 aa)) folds into the Obg domain. Residues 163–332 (ADVGLVGFPN…LKDKLWKMLN (170 aa)) enclose the OBG-type G domain. GTP is bound by residues 169–176 (GFPNAGKS), 194–198 (FTTLK), 216–219 (DIPG), 283–286 (SKCD), and 313–315 (SSV). Mg(2+)-binding residues include serine 176 and threonine 196.

This sequence belongs to the TRAFAC class OBG-HflX-like GTPase superfamily. OBG GTPase family. As to quaternary structure, monomer. It depends on Mg(2+) as a cofactor.

Its subcellular location is the cytoplasm. In terms of biological role, an essential GTPase which binds GTP, GDP and possibly (p)ppGpp with moderate affinity, with high nucleotide exchange rates and a fairly low GTP hydrolysis rate. Plays a role in control of the cell cycle, stress response, ribosome biogenesis and in those bacteria that undergo differentiation, in morphogenesis control. The protein is GTPase Obg of Flavobacterium johnsoniae (strain ATCC 17061 / DSM 2064 / JCM 8514 / BCRC 14874 / CCUG 350202 / NBRC 14942 / NCIMB 11054 / UW101) (Cytophaga johnsonae).